The sequence spans 336 residues: Glyceraldehyde-3-phosphate dehydrogenase 1 (336 aa).

NAD(+)-binding positions include 12 to 13 (RI), Asp34, and Arg79. Residues 149–151 (SCT), Thr180, 209–210 (TG), and Arg232 contribute to the D-glyceraldehyde 3-phosphate site. Residue Cys150 is the Nucleophile of the active site. NAD(+) is bound at residue Asn314.

The protein belongs to the glyceraldehyde-3-phosphate dehydrogenase family. As to quaternary structure, homotetramer.

Its subcellular location is the cytoplasm. It carries out the reaction D-glyceraldehyde 3-phosphate + phosphate + NAD(+) = (2R)-3-phospho-glyceroyl phosphate + NADH + H(+). It functions in the pathway carbohydrate degradation; glycolysis; pyruvate from D-glyceraldehyde 3-phosphate: step 1/5. With respect to regulation, inhibited by koningic acid through the interaction of cysteine residues with koningic acid even at very low concentrations. The polypeptide is Glyceraldehyde-3-phosphate dehydrogenase 1 (gpd1) (Trichoderma koningii (Hypocrea koningii)).